Consider the following 401-residue polypeptide: S-adenosylmethionine synthase (401 aa).

An ATP-binding site is contributed by 135 to 140 (GHGSGD).

It belongs to the AdoMet synthase 2 family. Mg(2+) serves as cofactor.

The enzyme catalyses L-methionine + ATP + H2O = S-adenosyl-L-methionine + phosphate + diphosphate. It functions in the pathway amino-acid biosynthesis; S-adenosyl-L-methionine biosynthesis; S-adenosyl-L-methionine from L-methionine: step 1/1. Functionally, catalyzes the formation of S-adenosylmethionine from methionine and ATP. This Methanobrevibacter smithii (strain ATCC 35061 / DSM 861 / OCM 144 / PS) protein is S-adenosylmethionine synthase.